The following is a 225-amino-acid chain: Uracil-DNA glycosylase (225 aa).

Residue D65 is the Proton acceptor of the active site.

Belongs to the uracil-DNA glycosylase (UDG) superfamily. UNG family.

The protein localises to the cytoplasm. It catalyses the reaction Hydrolyzes single-stranded DNA or mismatched double-stranded DNA and polynucleotides, releasing free uracil.. Its function is as follows. Excises uracil residues from the DNA which can arise as a result of misincorporation of dUMP residues by DNA polymerase or due to deamination of cytosine. In Alkaliphilus oremlandii (strain OhILAs) (Clostridium oremlandii (strain OhILAs)), this protein is Uracil-DNA glycosylase.